Consider the following 467-residue polypeptide: Sodium-dependent phosphate transport protein 1 (467 aa).

Asn41, Asn49, and Asn58 each carry an N-linked (GlcNAc...) asparagine glycan. The next 10 helical transmembrane spans lie at 81-101 (GIIL…VGYF), 119-139 (SVLS…VVVC), 178-198 (FLLG…SLGW), 200-220 (MVFY…FVLF), 257-277 (AILK…FFWS), 301-321 (GFLS…AGQL), 339-359 (LFTA…PYLS), 365-385 (IVIF…GVFI), 401-421 (CSTL…GLIL), and 433-453 (FILM…VATA).

Belongs to the major facilitator superfamily. Sodium/anion cotransporter family. In terms of assembly, interacts with PDZK1. In terms of tissue distribution, expressed in kidney cortex, liver and brain but not in other tissues.

Its subcellular location is the apical cell membrane. The catalysed reaction is 3 Na(+)(out) + phosphate(out) = 3 Na(+)(in) + phosphate(in). The enzyme catalyses urate(out) = urate(in). In terms of biological role, important for the resorption of phosphate by the kidney. May be involved in actively transporting phosphate into cells via Na(+) cotransport in the renal brush border membrane. Plays a role in urate transport in the kidney. The sequence is that of Sodium-dependent phosphate transport protein 1 (SLC17A1) from Homo sapiens (Human).